The chain runs to 1755 residues: Transposon Ty1-GR3 Gag-Pol polyprotein (1755 aa).

3 stretches are compositionally biased toward polar residues: residues 1–10 (MESQQLSNYP), 48–60 (TKANSQQTTTPAS), and 127–152 (QSQFPQYPSSVGTPLSTPSPESGNTF). 3 disordered regions span residues 1-93 (MESQ…MMTQ), 126-173 (PQSQ…RPPP), and 352-421 (GSRN…SKST). The segment covering 153-165 (TDSSSADSDMTST) has biased composition (low complexity). An RNA-binding region spans residues 299–401 (NNGIHINNKV…NSKSKTARAH (103 aa)). Low complexity predominate over residues 402-418 (NVSTSNNSPSTDNDSIS). S416 bears the Phosphoserine mark. Residue D461 is the For protease activity; shared with dimeric partner of the active site. Residues 583–640 (NVHTSESTRKYPYPFIHRMLAHANAQTIRYSLKNNTITYFNESDVDWSSAIDYQCPDC) are integrase-type zinc finger-like. In terms of domain architecture, Integrase catalytic spans 660-835 (NSYEPFQYLH…AGLDISTLLP (176 aa)). Residues D671 and D736 each coordinate Mg(2+). The interval 956–1172 (SKAVSPTDST…LGGIGDSNAY (217 aa)) is disordered. Residues 960 to 969 (SPTDSTPPST) are compositionally biased toward low complexity. Composition is skewed to polar residues over residues 1005–1015 (STPQISNIEST) and 1031–1043 (MSQSNTHESSYAS). Over residues 1044–1053 (KSKDFRHSDS) the composition is skewed to basic and acidic residues. Composition is skewed to polar residues over residues 1054–1082 (YSDNETNHTNVPISSTGGTNNKTVPQTSE) and 1095–1106 (SIDTSSSESNSL). The Bipartite nuclear localization signal motif lies at 1178–1212 (KKRSLEDNETEIKVSRDTWNTKNMRSLEPPRSKKR). One can recognise a Reverse transcriptase Ty1/copia-type domain in the interval 1338-1476 (NNYYITQLDI…DILGLEIKYQ (139 aa)). Mg(2+) is bound by residues D1346, D1427, D1428, D1610, E1652, and D1685. Positions 1610–1752 (DASYGNQPYY…IKTFKLLTNK (143 aa)) constitute an RNase H Ty1/copia-type domain.

As to quaternary structure, the capsid protein forms a homotrimer, from which the VLPs are assembled. The protease is a homodimer, whose active site consists of two apposed aspartic acid residues. Post-translationally, initially, virus-like particles (VLPs) are composed of the structural unprocessed proteins Gag and Gag-Pol, and also contain the host initiator methionine tRNA (tRNA(i)-Met) which serves as a primer for minus-strand DNA synthesis, and a dimer of genomic Ty RNA. Processing of the polyproteins occurs within the particle and proceeds by an ordered pathway, called maturation. First, the protease (PR) is released by autocatalytic cleavage of the Gag-Pol polyprotein yielding capsid protein p45 and a Pol-p154 precursor protein. This cleavage is a prerequisite for subsequent processing of Pol-p154 at the remaining sites to release the mature structural and catalytic proteins. Maturation takes place prior to the RT reaction and is required to produce transposition-competent VLPs.

The protein resides in the cytoplasm. Its subcellular location is the nucleus. It catalyses the reaction DNA(n) + a 2'-deoxyribonucleoside 5'-triphosphate = DNA(n+1) + diphosphate. The enzyme catalyses Endonucleolytic cleavage to 5'-phosphomonoester.. Its function is as follows. Capsid protein (CA) is the structural component of the virus-like particle (VLP), forming the shell that encapsulates the retrotransposons dimeric RNA genome. The particles are assembled from trimer-clustered units and there are holes in the capsid shells that allow for the diffusion of macromolecules. CA also has nucleocapsid-like chaperone activity, promoting primer tRNA(i)-Met annealing to the multipartite primer-binding site (PBS), dimerization of Ty1 RNA and initiation of reverse transcription. In terms of biological role, the aspartyl protease (PR) mediates the proteolytic cleavages of the Gag and Gag-Pol polyproteins after assembly of the VLP. Reverse transcriptase/ribonuclease H (RT) is a multifunctional enzyme that catalyzes the conversion of the retro-elements RNA genome into dsDNA within the VLP. The enzyme displays a DNA polymerase activity that can copy either DNA or RNA templates, and a ribonuclease H (RNase H) activity that cleaves the RNA strand of RNA-DNA heteroduplexes during plus-strand synthesis and hydrolyzes RNA primers. The conversion leads to a linear dsDNA copy of the retrotransposon that includes long terminal repeats (LTRs) at both ends. Functionally, integrase (IN) targets the VLP to the nucleus, where a subparticle preintegration complex (PIC) containing at least integrase and the newly synthesized dsDNA copy of the retrotransposon must transit the nuclear membrane. Once in the nucleus, integrase performs the integration of the dsDNA into the host genome. The protein is Transposon Ty1-GR3 Gag-Pol polyprotein (TY1B-GR3) of Saccharomyces cerevisiae (strain ATCC 204508 / S288c) (Baker's yeast).